Consider the following 208-residue polypeptide: Large ribosomal subunit protein uL3 (208 aa).

At glutamine 149 the chain carries N5-methylglutamine.

Belongs to the universal ribosomal protein uL3 family. In terms of assembly, part of the 50S ribosomal subunit. Forms a cluster with proteins L14 and L19. Methylated by PrmB.

One of the primary rRNA binding proteins, it binds directly near the 3'-end of the 23S rRNA, where it nucleates assembly of the 50S subunit. This is Large ribosomal subunit protein uL3 from Glaesserella parasuis serovar 5 (strain SH0165) (Haemophilus parasuis).